The chain runs to 561 residues: DNA mismatch repair protein MutL (561 aa).

This sequence belongs to the DNA mismatch repair MutL/HexB family.

This protein is involved in the repair of mismatches in DNA. It is required for dam-dependent methyl-directed DNA mismatch repair. May act as a 'molecular matchmaker', a protein that promotes the formation of a stable complex between two or more DNA-binding proteins in an ATP-dependent manner without itself being part of a final effector complex. In Rippkaea orientalis (strain PCC 8801 / RF-1) (Cyanothece sp. (strain PCC 8801)), this protein is DNA mismatch repair protein MutL.